A 180-amino-acid chain; its full sequence is ATP-dependent protease subunit HslV (180 aa).

T5 is an active-site residue. G161, C164, and T167 together coordinate Na(+).

Belongs to the peptidase T1B family. HslV subfamily. As to quaternary structure, a double ring-shaped homohexamer of HslV is capped on each side by a ring-shaped HslU homohexamer. The assembly of the HslU/HslV complex is dependent on binding of ATP.

It is found in the cytoplasm. The enzyme catalyses ATP-dependent cleavage of peptide bonds with broad specificity.. Allosterically activated by HslU binding. In terms of biological role, protease subunit of a proteasome-like degradation complex believed to be a general protein degrading machinery. This is ATP-dependent protease subunit HslV from Campylobacter jejuni subsp. jejuni serotype O:6 (strain 81116 / NCTC 11828).